Consider the following 86-residue polypeptide: RNA-binding protein Hfq (86 aa).

The region spanning 9 to 68 is the Sm domain; the sequence is DPYLNTLRKEKVGVSIYLVNGIKLQGTIESFDQFVILLKNTVSQMVYKHAISTVVPVRPI.

The protein belongs to the Hfq family. In terms of assembly, homohexamer.

RNA chaperone that binds small regulatory RNA (sRNAs) and mRNAs to facilitate mRNA translational regulation in response to envelope stress, environmental stress and changes in metabolite concentrations. Also binds with high specificity to tRNAs. In Pseudomonas savastanoi pv. phaseolicola (strain 1448A / Race 6) (Pseudomonas syringae pv. phaseolicola (strain 1448A / Race 6)), this protein is RNA-binding protein Hfq.